A 438-amino-acid polypeptide reads, in one-letter code: tRNA(Ile)-lysidine synthase (438 aa).

26–31 (SGGADS) contributes to the ATP binding site.

Belongs to the tRNA(Ile)-lysidine synthase family.

The protein localises to the cytoplasm. The catalysed reaction is cytidine(34) in tRNA(Ile2) + L-lysine + ATP = lysidine(34) in tRNA(Ile2) + AMP + diphosphate + H(+). Ligates lysine onto the cytidine present at position 34 of the AUA codon-specific tRNA(Ile) that contains the anticodon CAU, in an ATP-dependent manner. Cytidine is converted to lysidine, thus changing the amino acid specificity of the tRNA from methionine to isoleucine. This chain is tRNA(Ile)-lysidine synthase, found in Parabacteroides distasonis (strain ATCC 8503 / DSM 20701 / CIP 104284 / JCM 5825 / NCTC 11152).